Consider the following 190-residue polypeptide: CASP-like protein 1E1 (190 aa).

The segment at 1–23 (MEHESKNKVDGMEMEKGKKESGS) is disordered. The Cytoplasmic segment spans residues 1 to 28 (MEHESKNKVDGMEMEKGKKESGSRKGLE). The helical transmembrane segment at 29 to 49 (LTMRVLALVLTMVAATVLGVA) threads the bilayer. At 50–83 (KQTKVVPIKLIPTLPPLNVSTTAKASYLSAFVYN) the chain is on the extracellular side. The N-linked (GlcNAc...) asparagine glycan is linked to Asn-67. A helical transmembrane segment spans residues 84-104 (ISANAIACGYTAISIVIVMIS). At 105-111 (KGKRSKS) the chain is on the cytoplasmic side. A helical transmembrane segment spans residues 112 to 132 (LLMAVLIGDLMMVALLFSSTG). Residues 133–163 (AAGAIGLMGRHGNKHVMWKKVCGVFGKFCNQ) lie on the Extracellular side of the membrane. Residues 164–184 (AAVSVAITLIASVVFMLLVVL) traverse the membrane as a helical segment. The Cytoplasmic portion of the chain corresponds to 185–190 (DALKLP).

It belongs to the Casparian strip membrane proteins (CASP) family. In terms of assembly, homodimer and heterodimers.

Its subcellular location is the cell membrane. The sequence is that of CASP-like protein 1E1 from Arabidopsis thaliana (Mouse-ear cress).